The primary structure comprises 201 residues: Holliday junction branch migration complex subunit RuvA (201 aa).

The segment at 1–65 (MIAYIEGRVA…EDALELYGFS (65 aa)) is domain I. A domain II region spans residues 66–143 (GWDERQTFLV…KVESLPASAG (78 aa)). Positions 143 to 147 (GLAAG) are flexible linker. The domain III stretch occupies residues 148 to 201 (VPGSVLRDAVQALGNLGYAEEEAAPVLKNILKQDPDLDVSEALRAALKALAKAR).

This sequence belongs to the RuvA family. Homotetramer. Forms an RuvA(8)-RuvB(12)-Holliday junction (HJ) complex. HJ DNA is sandwiched between 2 RuvA tetramers; dsDNA enters through RuvA and exits via RuvB. An RuvB hexamer assembles on each DNA strand where it exits the tetramer. Each RuvB hexamer is contacted by two RuvA subunits (via domain III) on 2 adjacent RuvB subunits; this complex drives branch migration. In the full resolvosome a probable DNA-RuvA(4)-RuvB(12)-RuvC(2) complex forms which resolves the HJ.

The protein localises to the cytoplasm. In terms of biological role, the RuvA-RuvB-RuvC complex processes Holliday junction (HJ) DNA during genetic recombination and DNA repair, while the RuvA-RuvB complex plays an important role in the rescue of blocked DNA replication forks via replication fork reversal (RFR). RuvA specifically binds to HJ cruciform DNA, conferring on it an open structure. The RuvB hexamer acts as an ATP-dependent pump, pulling dsDNA into and through the RuvAB complex. HJ branch migration allows RuvC to scan DNA until it finds its consensus sequence, where it cleaves and resolves the cruciform DNA. The polypeptide is Holliday junction branch migration complex subunit RuvA (Oleidesulfovibrio alaskensis (strain ATCC BAA-1058 / DSM 17464 / G20) (Desulfovibrio alaskensis)).